A 143-amino-acid polypeptide reads, in one-letter code: Large-conductance mechanosensitive channel (143 aa).

The next 2 helical transmembrane spans lie at 16 to 36 (VIDL…VTAL) and 84 to 104 (INTV…VKLI).

This sequence belongs to the MscL family. As to quaternary structure, homopentamer.

The protein localises to the cell inner membrane. Its function is as follows. Channel that opens in response to stretch forces in the membrane lipid bilayer. May participate in the regulation of osmotic pressure changes within the cell. The sequence is that of Large-conductance mechanosensitive channel from Xanthomonas axonopodis pv. citri (strain 306).